Consider the following 353-residue polypeptide: UPF0283 membrane protein YcjF (353 aa).

3 helical membrane-spanning segments follow: residues 70 to 90, 100 to 120, and 213 to 233; these read MVMGGLALFGASVVGQGVQWT, VALGGCAAGALIIGAGVGSVV, and ESTLMIAVSPLALVDMAFIAW.

It belongs to the UPF0283 family.

The protein resides in the cell inner membrane. The polypeptide is UPF0283 membrane protein YcjF (Shigella sonnei (strain Ss046)).